The primary structure comprises 598 residues: Proline--tRNA ligase (598 aa).

Belongs to the class-II aminoacyl-tRNA synthetase family. ProS type 1 subfamily. In terms of assembly, homodimer.

The protein localises to the cytoplasm. It catalyses the reaction tRNA(Pro) + L-proline + ATP = L-prolyl-tRNA(Pro) + AMP + diphosphate. Catalyzes the attachment of proline to tRNA(Pro) in a two-step reaction: proline is first activated by ATP to form Pro-AMP and then transferred to the acceptor end of tRNA(Pro). As ProRS can inadvertently accommodate and process non-cognate amino acids such as alanine and cysteine, to avoid such errors it has two additional distinct editing activities against alanine. One activity is designated as 'pretransfer' editing and involves the tRNA(Pro)-independent hydrolysis of activated Ala-AMP. The other activity is designated 'posttransfer' editing and involves deacylation of mischarged Ala-tRNA(Pro). The misacylated Cys-tRNA(Pro) is not edited by ProRS. The sequence is that of Proline--tRNA ligase from Synechococcus sp. (strain CC9311).